A 233-amino-acid chain; its full sequence is Protein FAM204A (233 aa).

Positions 1–126 are disordered; sequence MWSGLLPPGL…HSEPSSNETQ (126 aa). Residues 13–24 are compositionally biased toward acidic residues; the sequence is SDAESNSEDEAT. Basic and acidic residues predominate over residues 39 to 58; it reads ESIRKTEIIDFSTDEPKTET. Residues 97–109 are compositionally biased toward basic residues; it reads FRGKRRKRSRKDK. The stretch at 144-164 forms a coiled coil; it reads VKRKKVEKSGLEKRIDQAVEE.

This Homo sapiens (Human) protein is Protein FAM204A (FAM204A).